The sequence spans 182 residues: Adenine phosphoribosyltransferase (182 aa).

Belongs to the purine/pyrimidine phosphoribosyltransferase family. As to quaternary structure, homodimer.

The protein resides in the cytoplasm. The catalysed reaction is AMP + diphosphate = 5-phospho-alpha-D-ribose 1-diphosphate + adenine. The protein operates within purine metabolism; AMP biosynthesis via salvage pathway; AMP from adenine: step 1/1. Functionally, catalyzes a salvage reaction resulting in the formation of AMP, that is energically less costly than de novo synthesis. The chain is Adenine phosphoribosyltransferase from Campylobacter jejuni subsp. jejuni serotype O:23/36 (strain 81-176).